A 430-amino-acid chain; its full sequence is Phosphomethylpyrimidine synthase (430 aa).

Residues Asn-68, Met-96, Tyr-125, His-164, 186-188 (SRG), 227-230 (DALR), and Glu-266 contribute to the substrate site. Residue His-270 participates in Zn(2+) binding. Tyr-293 provides a ligand contact to substrate. His-334 lines the Zn(2+) pocket. [4Fe-4S] cluster-binding residues include Cys-410, Cys-413, and Cys-417.

It belongs to the ThiC family. Requires [4Fe-4S] cluster as cofactor.

The catalysed reaction is 5-amino-1-(5-phospho-beta-D-ribosyl)imidazole + S-adenosyl-L-methionine = 4-amino-2-methyl-5-(phosphooxymethyl)pyrimidine + CO + 5'-deoxyadenosine + formate + L-methionine + 3 H(+). Its pathway is cofactor biosynthesis; thiamine diphosphate biosynthesis. Functionally, catalyzes the synthesis of the hydroxymethylpyrimidine phosphate (HMP-P) moiety of thiamine from aminoimidazole ribotide (AIR) in a radical S-adenosyl-L-methionine (SAM)-dependent reaction. The polypeptide is Phosphomethylpyrimidine synthase (Pyrobaculum aerophilum (strain ATCC 51768 / DSM 7523 / JCM 9630 / CIP 104966 / NBRC 100827 / IM2)).